Consider the following 1040-residue polypeptide: Contactin-2 (1040 aa).

Positions 1-30 are cleaved as a signal peptide; sequence MGTHARKKASLLLLVLATVALVSSPGWSFA. Ig-like C2-type domains follow at residues 39-130, 135-224, 241-324, 329-413, 419-506, and 511-605; these read PIFE…AVLR, QEFS…SVFS, PSIK…GRII, PEWL…AELA, PDFR…GILS, and TKIT…ATVL. Cystine bridges form between cysteine 63–cysteine 113, cysteine 157–cysteine 209, cysteine 263–cysteine 308, and cysteine 350–cysteine 397. N-linked (GlcNAc...) asparagine glycosylation is found at asparagine 78, asparagine 200, and asparagine 206. N-linked (GlcNAc...) asparagine glycans are attached at residues asparagine 463, asparagine 479, asparagine 500, and asparagine 527. Fibronectin type-III domains lie at 612–710, 715–812, 817–913, and 917–1008; these read PPGG…TKEA, APSG…SAEE, APAK…VKPP, and PPGN…NGGT. N-linked (GlcNAc...) asparagine glycosylation is present at asparagine 777. Positions 796–798 match the Cell attachment site motif; the sequence is RGD. N-linked (GlcNAc...) asparagine glycans are attached at residues asparagine 832, asparagine 920, and asparagine 942. Residues 895–921 form a disordered region; it reads RAGTGPASPSADAMTVKPPPRRPPGNI. Alanine 1015 is lipidated: GPI-anchor amidated alanine. Residues 1016–1040 constitute a propeptide, removed in mature form; sequence AARPAHPGPAFSCMVILMLAGYQKL.

This sequence belongs to the immunoglobulin superfamily. Contactin family. In terms of tissue distribution, in neural tissues in embryos, and in adult brain, spinal cord and cerebellum.

The protein localises to the cell membrane. Its function is as follows. May play a role in the initial growth and guidance of axons. May be involved in cell adhesion. In conjunction with another transmembrane protein, CNTNAP2, contributes to the organization of axonal domains at nodes of Ranvier by maintaining voltage-gated potassium channels at the juxtaparanodal region. This Rattus norvegicus (Rat) protein is Contactin-2 (Cntn2).